A 513-amino-acid chain; its full sequence is Cytochrome P450 monooxygenase orf3 (513 aa).

A helical membrane pass occupies residues 11-31 (LVALGLIAATIIIYSFTLTVY). Asn-211 and Asn-351 each carry an N-linked (GlcNAc...) asparagine glycan. Residue Cys-455 coordinates heme.

Belongs to the cytochrome P450 family. The cofactor is heme.

It localises to the membrane. The protein operates within mycotoxin biosynthesis. Cytochrome P450 monooxygenase; part of the gene cluster that mediates the biosynthesis of brefeldin A (BFA), a protein transport inhibitor that shows antiviral, antifungal, and antitumor properties. The proposed biosynthesis of BFA involves formation of an acyclic polyketide chain that is differentially tailored throughout the backbone. The highly reducing polyketide synthase Bref-PKS is proposed to synthesize the precisely reduced octaketide precursor, which could then be directly offloaded by the thiohydrolase enzyme Bref-TH followed by a cytochrome P450 monooxygenase-mediated formation of the cyclopentane ring and macrocyclization to afford 7-deoxy BFA. Alternatively, the first ring annulation can also occur on the ACP-tethered intermediate before the thiohydrolase release and lactonization. The C7-hydroxylation by another cytochrome P450 monooxygenase is believed to be the final step in the process to obtain the final structure of BFA. In addition to the HRPKS Bref-PKS and the thiohydrolase Bref-TH, the brefeldin A biosynthesis cluster contains 4 cytochrome p450 monooxygenases (called orf3 to orf6), as well a the probable cluster-specific transcription regulator orf8. The protein is Cytochrome P450 monooxygenase orf3 of Eupenicillium brefeldianum (Penicillium brefeldianum).